The primary structure comprises 147 residues: Putative pre-16S rRNA nuclease (147 aa).

Belongs to the YqgF nuclease family.

Its subcellular location is the cytoplasm. Functionally, could be a nuclease involved in processing of the 5'-end of pre-16S rRNA. This Polynucleobacter necessarius subsp. necessarius (strain STIR1) protein is Putative pre-16S rRNA nuclease.